The primary structure comprises 491 residues: Nucleotidyltransferase MB21D2 (491 aa).

The segment covering 431–442 (RGSTTSIPSPQS) has biased composition (polar residues). The segment at 431–452 (RGSTTSIPSPQSDGGDPNQPDD) is disordered. Threonine 435 carries the post-translational modification Phosphothreonine. Serine 436, serine 439, and serine 442 each carry phosphoserine.

The protein belongs to the mab-21 family.

Functionally, probable nucleotidyltransferase that catalyzes the formation of cyclic dinucleotide second messenger in response to some unknown stimulus. This Homo sapiens (Human) protein is Nucleotidyltransferase MB21D2.